The following is a 179-amino-acid chain: ATP synthase subunit delta (179 aa).

The protein belongs to the ATPase delta chain family. As to quaternary structure, F-type ATPases have 2 components, F(1) - the catalytic core - and F(0) - the membrane proton channel. F(1) has five subunits: alpha(3), beta(3), gamma(1), delta(1), epsilon(1). F(0) has three main subunits: a(1), b(2) and c(10-14). The alpha and beta chains form an alternating ring which encloses part of the gamma chain. F(1) is attached to F(0) by a central stalk formed by the gamma and epsilon chains, while a peripheral stalk is formed by the delta and b chains.

Its subcellular location is the cell inner membrane. Its function is as follows. F(1)F(0) ATP synthase produces ATP from ADP in the presence of a proton or sodium gradient. F-type ATPases consist of two structural domains, F(1) containing the extramembraneous catalytic core and F(0) containing the membrane proton channel, linked together by a central stalk and a peripheral stalk. During catalysis, ATP synthesis in the catalytic domain of F(1) is coupled via a rotary mechanism of the central stalk subunits to proton translocation. Functionally, this protein is part of the stalk that links CF(0) to CF(1). It either transmits conformational changes from CF(0) to CF(1) or is implicated in proton conduction. This chain is ATP synthase subunit delta, found in Koribacter versatilis (strain Ellin345).